Reading from the N-terminus, the 155-residue chain is Ribosomal RNA large subunit methyltransferase H (155 aa).

Residues L72, G104, and 123–128 (LAKITL) contribute to the S-adenosyl-L-methionine site.

This sequence belongs to the RNA methyltransferase RlmH family. As to quaternary structure, homodimer.

The protein localises to the cytoplasm. The catalysed reaction is pseudouridine(1915) in 23S rRNA + S-adenosyl-L-methionine = N(3)-methylpseudouridine(1915) in 23S rRNA + S-adenosyl-L-homocysteine + H(+). Specifically methylates the pseudouridine at position 1915 (m3Psi1915) in 23S rRNA. The protein is Ribosomal RNA large subunit methyltransferase H of Mycoplasma capricolum subsp. capricolum (strain California kid / ATCC 27343 / NCTC 10154).